Here is a 481-residue protein sequence, read N- to C-terminus: Argininosuccinate lyase (481 aa).

This sequence belongs to the lyase 1 family. Argininosuccinate lyase subfamily.

Its subcellular location is the cytoplasm. The catalysed reaction is 2-(N(omega)-L-arginino)succinate = fumarate + L-arginine. It functions in the pathway amino-acid biosynthesis; L-arginine biosynthesis; L-arginine from L-ornithine and carbamoyl phosphate: step 3/3. In Kineococcus radiotolerans (strain ATCC BAA-149 / DSM 14245 / SRS30216), this protein is Argininosuccinate lyase.